We begin with the raw amino-acid sequence, 210 residues long: MAKFTNCLVLSLLLAAFVGAFGAEFSEADKATLVNDIAENIQKEILGEVKTSETVLTMFLKEMQLKGLPVCGETCFGGTCNTPGCSCTWPICTRDSLPMRAGGKTSETTLHMFLKEMQLKGLPVCGETCFGGTCNTPGCSCTWPICTRDSLPMSAGGKTSETTLHMFLKEMQLKGLPVCGETCFGGTCNTPGCSCTWPICTRDSLPLVAA.

Residues 1 to 22 (MAKFTNCLVLSLLLAAFVGAFG) form the signal peptide. Residues 23 to 66 (AEFSEADKATLVNDIAENIQKEILGEVKTSETVLTMFLKEMQLK) constitute a propeptide that is removed on maturation. A cross-link (cyclopeptide (Gly-Asp)) is located at residues 67 to 95 (GLPVCGETCFGGTCNTPGCSCTWPICTRD). 3 cysteine pairs are disulfide-bonded: C71-C85, C75-C87, and C80-C92. Positions 96-120 (SLPMRAGGKTSETTLHMFLKEMQLK) are excised as a propeptide. The segment at residues 121–149 (GLPVCGETCFGGTCNTPGCSCTWPICTRD) is a cross-link (cyclopeptide (Gly-Asp)). 3 cysteine pairs are disulfide-bonded: C125/C139, C129/C141, and C134/C146. Residues 150–174 (SLPMSAGGKTSETTLHMFLKEMQLK) constitute a propeptide that is removed on maturation. A cross-link (cyclopeptide (Gly-Asp)) is located at residues 175–203 (GLPVCGETCFGGTCNTPGCSCTWPICTRD). 3 cysteine pairs are disulfide-bonded: C179–C193, C183–C195, and C188–C200. A propeptide spanning residues 204-210 (SLPLVAA) is cleaved from the precursor.

The protein belongs to the cyclotide family. Moebius subfamily. Kalata-B2 is a cyclic peptide which occurs in three forms: with unmodified Trp, with Trp oxidized to form N-formylkynurenine and with Trp oxidized to form kynurenine. Oxidation is enhanced by exposure to sunlight.

Functionally, probably participates in a plant defense mechanism. Inhibitory effect on the growth and development of larvae from Helicoverpa punctigera. Has hemolytic activity. In Oldenlandia affinis, this protein is Kalata-B2 (OAK4).